Here is a 251-residue protein sequence, read N- to C-terminus: RING-H2 finger protein ATL10 (251 aa).

A helical membrane pass occupies residues 59 to 79 (MMLLSILICGIICCLGLHYII). Residues 135–177 (CVICLSDFVSGEQLRLLPKCNHGFHVRCIDKWLQQHLTCPKCR) form an RING-type; atypical zinc finger.

The protein belongs to the RING-type zinc finger family. ATL subfamily.

Its subcellular location is the membrane. It carries out the reaction S-ubiquitinyl-[E2 ubiquitin-conjugating enzyme]-L-cysteine + [acceptor protein]-L-lysine = [E2 ubiquitin-conjugating enzyme]-L-cysteine + N(6)-ubiquitinyl-[acceptor protein]-L-lysine.. The protein operates within protein modification; protein ubiquitination. The protein is RING-H2 finger protein ATL10 (ATL10) of Arabidopsis thaliana (Mouse-ear cress).